The chain runs to 834 residues: Semaphorin-4C (834 aa).

An N-terminal signal peptide occupies residues M1–G20. Residues A21–G664 lie on the Extracellular side of the membrane. Positions R30–L497 constitute a Sema domain. The dominant negative effect on myogenic differentiation stretch occupies residues S46–R489. Cysteines 99 and 110 form a disulfide. N-linked (GlcNAc...) asparagine glycosylation is found at N106 and N121. 3 disulfides stabilise this stretch: C128/C137, C261/C370, and C285/C330. Residues N310 and N419 are each glycosylated (N-linked (GlcNAc...) asparagine). The PSI domain maps to D499 to N552. 2 disulfide bridges follow: C500–C517 and C509–C526. N522 and N565 each carry an N-linked (GlcNAc...) asparagine glycan. Residues K557–A645 form the Ig-like C2-type domain. An intrachain disulfide couples C578 to C628. Residues L665–L685 form a helical membrane-spanning segment. Topologically, residues S686–V834 are cytoplasmic. Position 743 is a phosphoserine (S743). Positions G749–V834 are disordered. Pro residues predominate over residues G757–S773. A PDZ-binding motif is present at residues E831–V834.

This sequence belongs to the semaphorin family. Interacts (via the PDZ-binding motif) with GIPC (via the PDZ domain). Interacts with NCDN. Interacts (via the PDZ-binding motif) with DLG4. Interacts with PLXNB2. As to expression, predominantly expressed in brain (at protein level).

Its subcellular location is the postsynaptic density membrane. It is found in the cytoplasmic vesicle. The protein resides in the secretory vesicle. The protein localises to the synaptic vesicle membrane. Cell surface receptor for PLXNB2 that plays an important role in cell-cell signaling. PLXNB2 binding promotes downstream activation of RHOA and phosphorylation of ERBB2 at 'Tyr-1248'. Required for normal brain development, axon guidance and cell migration. Probable signaling receptor which may play a role in myogenic differentiation through activation of the stress-activated MAPK cascade. In Mus musculus (Mouse), this protein is Semaphorin-4C (Sema4c).